Here is a 268-residue protein sequence, read N- to C-terminus: MKRVALLVQYDGSHYSGWQKQKNATTVQEILDRALLKITNHTVQTFAAGRTDAGVHASGQVVHCDVDCVVPGNSYSDVLNSLLPSSIRILESIEVKDSWHACYSALYRHYRYVINNSKFPNLFIDNWSWHRYQKVLDEVLMLNASRQMIGEHDFFAFQKTGSNRTNSITKIKNIDIKRVEDLIFVDIKATGFLYGMVRLIIGQLVLVGENKISPEIFTDRWVNKKKNDVKESAPAKGLCFVNAVYEENVFKKINNNDFFPVFIIKGFS.

Asp52 functions as the Nucleophile in the catalytic mechanism. Tyr110 contacts substrate.

Belongs to the tRNA pseudouridine synthase TruA family. In terms of assembly, homodimer.

The catalysed reaction is uridine(38/39/40) in tRNA = pseudouridine(38/39/40) in tRNA. Functionally, formation of pseudouridine at positions 38, 39 and 40 in the anticodon stem and loop of transfer RNAs. This is tRNA pseudouridine synthase A from Prochlorococcus marinus (strain MIT 9301).